The following is a 1128-amino-acid chain: Inactive phospholipase C-like protein 2 (1128 aa).

The segment at 1-129 is disordered; the sequence is MAECGRGAAG…KKTVSFSSMP (129 aa). Alanine 2 is subject to N-acetylalanine. Serine 16 is modified (phosphoserine). Low complexity predominate over residues 20–30; sequence ALGAKGALKAG. A compositionally biased stretch (gly residues) spans 31–43; that stretch reads AGEGGGGGGGGRL. The residue at position 85 (threonine 85) is a Phosphothreonine. One can recognise a PH domain in the interval 142-252; the sequence is NSMVEGSELK…WVTGLRYLIS (111 aa). One can recognise a PI-PLC X-box domain in the interval 427-571; the sequence is QDMKQPLSHY…LKGKILIKAK (145 aa). Residue threonine 585 is modified to Phosphothreonine. The PI-PLC Y-box domain occupies 619–735; that stretch reads LSELVSICKS…GYVLRPAIMR (117 aa). A C2 domain is found at 735 to 864; that stretch reads REEVSFFSAN…TGYRHVPLQS (130 aa). Residues 1100–1128 are disordered; the sequence is KPGTENSEAQKPRRSLEAIPEKASDENGD. Positions 1107 to 1128 are enriched in basic and acidic residues; it reads EAQKPRRSLEAIPEKASDENGD. The residue at position 1114 (serine 1114) is a Phosphoserine.

In terms of tissue distribution, ubiquitously expressed, with a strong expression in skeletal muscle.

The protein resides in the cytoplasm. May play an role in the regulation of Ins(1,4,5)P3 around the endoplasmic reticulum. The sequence is that of Inactive phospholipase C-like protein 2 (Plcl2) from Mus musculus (Mouse).